The sequence spans 106 residues: MARKIRKGDTVMVLSGKDKGKTGEVVRVIPKEDKVVVRGVNVVKRHQRPNAQMRQGGIIEKESPIYACKVALVCPSCGKATRVGFRFLEDGTKVRYCKKCGEVIDK.

It belongs to the universal ribosomal protein uL24 family. In terms of assembly, part of the 50S ribosomal subunit.

In terms of biological role, one of two assembly initiator proteins, it binds directly to the 5'-end of the 23S rRNA, where it nucleates assembly of the 50S subunit. Its function is as follows. One of the proteins that surrounds the polypeptide exit tunnel on the outside of the subunit. The protein is Large ribosomal subunit protein uL24 of Thermosipho africanus (strain TCF52B).